The primary structure comprises 509 residues: tRNA (guanine(37)-N(1))-methyltransferase (509 aa).

Residues 1 to 57 (MVLWILWRPFGFSRRLLKLERHSITESKSLIPLAWTSLTQTLSESPGIFLLGQRKRF) constitute a mitochondrion transit peptide. S-adenosyl-L-methionine-binding positions include histidine 289, 327–328 (DL), 355–356 (DG), and asparagine 387. Residues 478 to 509 (TKNPENHEDPPLKRQRTAEAFSDEKTQIASNT) form a disordered region.

The protein belongs to the class I-like SAM-binding methyltransferase superfamily. TRM5/TYW2 family. In terms of assembly, monomer.

It localises to the mitochondrion matrix. The protein localises to the nucleus. The protein resides in the cytoplasm. The catalysed reaction is guanosine(37) in tRNA + S-adenosyl-L-methionine = N(1)-methylguanosine(37) in tRNA + S-adenosyl-L-homocysteine + H(+). In terms of biological role, involved in mitochondrial tRNA methylation. Specifically methylates the N1 position of guanosine-37 in various tRNAs. Methylation is not dependent on the nature of the nucleoside 5' of the target nucleoside. This is the first step in the biosynthesis of wybutosine (yW), a modified base adjacent to the anticodon of tRNAs and required for accurate decoding. The sequence is that of tRNA (guanine(37)-N(1))-methyltransferase from Macaca mulatta (Rhesus macaque).